We begin with the raw amino-acid sequence, 587 residues long: Methylcrotonoyl-CoA carboxylase beta chain, mitochondrial (587 aa).

The transit peptide at 1-26 (MLRILGRRVVSASKELTSIQQWRIRP) directs the protein to the mitochondrion. Positions 68-324 (MEGILSELRS…AAKQGMEGTF (257 aa)) constitute a CoA carboxyltransferase N-terminal domain. A carboxyltransferase region spans residues 68 to 579 (MEGILSELRS…SAALNRPLED (512 aa)). A CoA carboxyltransferase C-terminal domain is found at 333 to 579 (EPLYDINELR…SAALNRPLED (247 aa)). The tract at residues 367-396 (EFDEFKKQYGTTLVTGFARIYGQTVGIIGN) is acyl-CoA binding.

It belongs to the AccD/PCCB family. In terms of assembly, probably a heterodimer composed of biotin-containing alpha subunits and beta subunits. In roots, cotyledons, leaves, flowers, ovaries, siliques and embryos.

The protein resides in the mitochondrion matrix. It carries out the reaction 3-methylbut-2-enoyl-CoA + hydrogencarbonate + ATP = 3-methyl-(2E)-glutaconyl-CoA + ADP + phosphate + H(+). It participates in amino-acid degradation; L-leucine degradation; (S)-3-hydroxy-3-methylglutaryl-CoA from 3-isovaleryl-CoA: step 2/3. Functionally, carboxyltransferase subunit of the 3-methylcrotonyl-CoA carboxylase, an enzyme that catalyzes the conversion of 3-methylcrotonyl-CoA to 3-methylglutaconyl-CoA, a critical step for leucine and isovaleric acid catabolism. This is Methylcrotonoyl-CoA carboxylase beta chain, mitochondrial (MCCB) from Arabidopsis thaliana (Mouse-ear cress).